Here is a 1893-residue protein sequence, read N- to C-terminus: Serine-aspartate repeat-containing protein I (1893 aa).

A signal peptide spans 1-54 (MNFKGVKLLKNSKKRLDFLPNTLNKYSIRKFTVGTASILVGATLFLGVSNEAEA). A disordered region spans residues 53–333 (EAAEKIDSPT…AHGINNKNKQ (281 aa)). A compositionally biased stretch (basic and acidic residues) spans 54–222 (AAEKIDSPTK…AEEPATKEEA (169 aa)). 21 consecutive repeat copies span residues 72 to 83 (AATKEEAATTEE), 84 to 95 (PATKEEAATTEE), 96 to 107 (PATKEEAAIAEE), 108 to 119 (PATKEEAATTEE), 120 to 131 (PATKEEAAIAEE), 132 to 143 (PATKEEAATTEE), 144 to 155 (PATKEEAATTEE), 156 to 167 (PATKEEAAIAEE), 168 to 179 (PATKEEAATTEE), 180 to 191 (PATKEEAAIAEE), 192 to 203 (PATKEEAVTSEE), 204 to 215 (AATKEKAAIAEE), 216 to 227 (PATKEEAAIAEE), 228 to 239 (PETKEEAATTEE), 240 to 251 (PATKEEAAIAEE), 252 to 263 (AATKEKAVTSEE), 264 to 275 (AATKEKAAIAEE), 276 to 287 (AATKEKAAIAEE), 288 to 299 (PETKEEAATTEE), 300 to 311 (PETKEEAAIAEE), and 312 to 323 (PATKEKAVTSEE). The segment at 72-323 (AATKEEAATT…TKEKAVTSEE (252 aa)) is 21 X 12 AA tandem repeat of [AP]-[AE]-T-K-E-[EK]-A-[AV]-[IT]-[AST]-E-E. Over residues 240–284 (PATKEEAAIAEEAATKEKAVTSEEAATKEKAAIAEEAATKEKAAI) the composition is skewed to basic and acidic residues. Positions 286–302 (EEPETKEEAATTEEPET) are enriched in acidic residues. A compositionally biased stretch (basic and acidic residues) spans 312–325 (PATKEKAVTSEEAH). The interval 324–755 (AHGINNKNKQ…GSSTAQGDNP (432 aa)) is ligand binding A region. CNA-B domains follow at residues 756–874 (TYNL…YETP) and 875–984 (KYSL…YFDE). Residues 941-1867 (KPEGLTQTTT…GNNTQNNGTL (927 aa)) are disordered. A compositionally biased stretch (basic and acidic residues) spans 955-975 (DENKDADGEEVHVTITDHDDF). The segment covering 981–1836 (YFDEDSDADA…DSDADADADS (856 aa)) has biased composition (acidic residues). The span at 1837–1851 (DADKYHNDTADKSND) shows a compositional bias: basic and acidic residues. The LPXTG sorting signal signature appears at 1854–1858 (LPDTG). Thr-1857 carries the pentaglycyl murein peptidoglycan amidated threonine modification. Residues 1858–1893 (GNNTQNNGTLFGSLFAALGGLFLVGSRRKNKNNEEK) constitute a propeptide, removed by sortase.

This sequence belongs to the serine-aspartate repeat-containing protein (SDr) family.

The protein localises to the secreted. It is found in the cell wall. Its function is as follows. Responsible for collagen binding by S.saprophyticus. The protein is Serine-aspartate repeat-containing protein I (sdrI) of Staphylococcus saprophyticus.